Reading from the N-terminus, the 577-residue chain is Sensor protein ChvG (577 aa).

The Cytoplasmic portion of the chain corresponds to 1 to 29; the sequence is MRGQRRWAHPFTLIRRLFGNAVFSSLTRR. The chain crosses the membrane as a helical span at residues 30–50; it reads IVFFNLVALVVLVGGIMYLNQ. The Periplasmic portion of the chain corresponds to 51 to 260; that stretch reads FREGLIDARV…DIDKIVHAER (210 aa). Residues 261–281 traverse the membrane as a helical segment; it reads LAIIRVFGVAALVNVILSLLL. Residues 282–577 lie on the Cytoplasmic side of the membrane; that stretch reads SSTIANPLRR…VLSLPAGPHP (296 aa). Residues 283 to 339 enclose the HAMP domain; that stretch reads STIANPLRRLSAAAIRVRRGGAKEREEIPDFSSRQDEIGNLSVALREMTTALYDRIA. A Histidine kinase domain is found at 347-575; that stretch reads DVSHELKNPL…RFVLSLPAGP (229 aa). Histidine 350 is modified (phosphohistidine).

As to quaternary structure, homodimer.

It localises to the cell inner membrane. The enzyme catalyses ATP + protein L-histidine = ADP + protein N-phospho-L-histidine.. It functions in the pathway glycan metabolism; exopolysaccharide biosynthesis. Member of a two-component regulatory system ChvG(ExoS)/ChvI involved in regulating the production of succinoglycan. Activates ChvI by phosphorylation. The chain is Sensor protein ChvG (chvG) from Rhizobium meliloti (strain 1021) (Ensifer meliloti).